The sequence spans 2214 residues: Multifunctional protein URA2 (2214 aa).

At A2 the chain carries N-acetylalanine. The tract at residues 2–400 (ATIAPTAPIT…PGPRDTEFLF (399 aa)) is GATase (Glutamine amidotransferase). L-glutamine is bound by residues S64, G273, and G275. The Glutamine amidotransferase type-1 domain occupies 228–413 (RILAIDVGMK…IQAVKEFKYT (186 aa)). Catalysis depends on C302, which acts as the Nucleophile; for GATase activity. L-glutamine-binding residues include L303, Q306, N344, G346, and F347. Active-site for GATase activity residues include H386 and E388. Positions 401–440 (DVFIQAVKEFKYTQVLKPIAFPGGLLEDNVKAHPRIEAKK) are linker. Residues 440-980 (KVLVLGSGGL…DSHDLSFDDH (541 aa)) form a CPSase A region. The CPSase (Carbamoyl phosphate synthase) stretch occupies residues 440–1482 (KVLVLGSGGL…TNVKCAKLLI (1043 aa)). ATP-binding residues include R558, R598, G604, G605, K635, M637, E642, G668, I669, H670, Q711, and E725. 2 ATP-grasp domains span residues 562–754 (SNAI…KLGL) and 1099–1290 (SRML…KAIM). Positions 711, 725, and 727 each coordinate Mg(2+). 3 residues coordinate Mn(2+): Q711, E725, and N727. Residues 981-1482 (GVMVLGSGVY…TNVKCAKLLI (502 aa)) form a CPSase B region. ATP-binding residues include R1135, K1174, I1176, E1181, G1206, V1207, H1208, S1209, Q1249, and E1261. Positions 1249, 1261, and 1263 each coordinate Mg(2+). Residues Q1249, E1261, and N1263 each coordinate Mn(2+). The region spanning 1356-1508 (FKLPKKNILL…QTSHRTITLP (153 aa)) is the MGS-like domain. The interval 1483–1492 (EAISRNITLD) is linker. The interval 1493-1821 (VSERDAQTSH…YNGETLVLSG (329 aa)) is defective DHOase domain. The linker stretch occupies residues 1822-1909 (ELVSPGAKGK…NLIRSNNPFR (88 aa)). A Glycyl lysine isopeptide (Lys-Gly) (interchain with G-Cter in ubiquitin) cross-link involves residue K1853. At S1857 the chain carries Phosphoserine; by PKA. Positions 1910–2214 (GRHILSIKQF…LLAMVMGVDM (305 aa)) are ATCase (Aspartate transcarbamylase). Residues R1962 and T1963 each coordinate carbamoyl phosphate. K1990 is an L-aspartate binding site. 3 residues coordinate carbamoyl phosphate: R2011, H2039, and Q2042. 2 residues coordinate L-aspartate: R2072 and R2134. Carbamoyl phosphate contacts are provided by L2173 and P2174.

This sequence in the N-terminal section; belongs to the CarA family. It in the 2nd section; belongs to the CarB family. The protein in the 3rd section; belongs to the metallo-dependent hydrolases superfamily. DHOase family. CAD subfamily. In the C-terminal section; belongs to the aspartate/ornithine carbamoyltransferase superfamily. ATCase family. Mg(2+) serves as cofactor. The cofactor is Mn(2+).

It is found in the cytoplasm. The enzyme catalyses hydrogencarbonate + L-glutamine + 2 ATP + H2O = carbamoyl phosphate + L-glutamate + 2 ADP + phosphate + 2 H(+). It carries out the reaction L-glutamine + H2O = L-glutamate + NH4(+). The catalysed reaction is hydrogencarbonate + NH4(+) + 2 ATP = carbamoyl phosphate + 2 ADP + phosphate + 2 H(+). It catalyses the reaction carbamoyl phosphate + L-aspartate = N-carbamoyl-L-aspartate + phosphate + H(+). Its pathway is pyrimidine metabolism; UMP biosynthesis via de novo pathway; (S)-dihydroorotate from bicarbonate: step 1/3. It functions in the pathway pyrimidine metabolism; UMP biosynthesis via de novo pathway; (S)-dihydroorotate from bicarbonate: step 2/3. Both CPSase and ATCase activities are feedback inhibited by the end product UTP. Multifunctional protein that encodes the first 2 enzymatic activities of the de novo pyrimidine pathway: carbamoylphosphate synthetase (CPSase; EC 6.3.5.5) and aspartate transcarbamylase (ATCase; EC 2.1.3.2). The CPSase-function is accomplished in 2 steps, by a glutamine-dependent amidotransferase activity (GATase) that binds and cleaves glutamine to produce ammonia, followed by an ammonium-dependent carbamoyl phosphate synthetase, which reacts with the ammonia, hydrogencarbonate and ATP to form carbamoyl phosphate. The endogenously produced carbamoyl phosphate is sequestered and channeled to the ATCase active site. ATCase then catalyzes the formation of carbamoyl-L-aspartate from L-aspartate and carbamoyl phosphate. In Saccharomyces cerevisiae (strain ATCC 204508 / S288c) (Baker's yeast), this protein is Multifunctional protein URA2 (URA2).